The following is a 131-amino-acid chain: Profilin-3 (131 aa).

Cys13 and Cys115 form a disulfide bridge. An Involved in PIP2 interaction motif is present at residues 81 to 97; sequence AVIRGKKGAGGITIKKT. Phosphothreonine is present on Thr111.

Belongs to the profilin family. In terms of assembly, occurs in many kinds of cells as a complex with monomeric actin in a 1:1 ratio. Post-translationally, phosphorylated by MAP kinases.

The protein localises to the cytoplasm. Its subcellular location is the cytoskeleton. Binds to actin and affects the structure of the cytoskeleton. At high concentrations, profilin prevents the polymerization of actin, whereas it enhances it at low concentrations. This is Profilin-3 from Olea europaea (Common olive).